We begin with the raw amino-acid sequence, 570 residues long: Sulfite reductase [NADPH] hemoprotein beta-component (570 aa).

[4Fe-4S] cluster contacts are provided by C434, C440, C479, and C483. Position 483 (C483) interacts with siroheme.

Belongs to the nitrite and sulfite reductase 4Fe-4S domain family. As to quaternary structure, alpha(8)-beta(8). The alpha component is a flavoprotein, the beta component is a hemoprotein. Siroheme is required as a cofactor. [4Fe-4S] cluster serves as cofactor.

The catalysed reaction is hydrogen sulfide + 3 NADP(+) + 3 H2O = sulfite + 3 NADPH + 4 H(+). It participates in sulfur metabolism; hydrogen sulfide biosynthesis; hydrogen sulfide from sulfite (NADPH route): step 1/1. Functionally, component of the sulfite reductase complex that catalyzes the 6-electron reduction of sulfite to sulfide. This is one of several activities required for the biosynthesis of L-cysteine from sulfate. The chain is Sulfite reductase [NADPH] hemoprotein beta-component from Salmonella paratyphi B (strain ATCC BAA-1250 / SPB7).